The primary structure comprises 307 residues: RHOMBOID-like protein 6, mitochondrial (307 aa).

The N-terminal 62 residues, 1–62 (MRSRDMERGR…DCVAKLLRRF (62 aa)), are a transit peptide targeting the mitochondrion. 6 helical membrane-spanning segments follow: residues 105–125 (WLHAGIIHLVMNMFDVIIFGI), 136–156 (IGLIYLISGFGGSILSALFLQ), 159–179 (ISVGASGALLGLMGAMLSELL), 191–211 (ALLSFLFIIAINLAIGLLPWV), 214–234 (FAHIGGLLTGFCLGFILLMQP), and 262–282 (LFFVAAVLVVAGLTVGLVMLF). Ser-164 (nucleophile) is an active-site residue. The active-site Charge relay system is the His-216.

It belongs to the peptidase S54 family.

The protein resides in the mitochondrion membrane. The enzyme catalyses Cleaves type-1 transmembrane domains using a catalytic dyad composed of serine and histidine that are contributed by different transmembrane domains.. Probable rhomboid-type serine protease that catalyzes intramembrane proteolysis. Might be involved in response to abiotic stimuli. The chain is RHOMBOID-like protein 6, mitochondrial from Arabidopsis thaliana (Mouse-ear cress).